The following is a 228-amino-acid chain: MLSIERLGVGRGGQMVASGIDLCIEAGWALQIHGANGSGKTTLLRVLAGLMPPAGGQVSWYGANVRAHPEKFRRDLAFVGHANGVNDDLTVLENLRFATLLGAGSGAPDGTSSVPASGRSGVAAPPSRRDMLARAGMLPLQHTRAGCLSQGQRRRVALARLMLDRKPLWLLDEPGDALDDSASGWLHECLALHMQDGGIVVATTHRSLQTPAARTRHLHLERSGAWLD.

The ABC transporter domain maps to 2-227 (LSIERLGVGR…LHLERSGAWL (226 aa)). 34–41 (GANGSGKT) provides a ligand contact to ATP. The tract at residues 106-126 (GAPDGTSSVPASGRSGVAAPP) is disordered.

The protein belongs to the ABC transporter superfamily. CcmA exporter (TC 3.A.1.107) family. As to quaternary structure, the complex is composed of two ATP-binding proteins (CcmA) and two transmembrane proteins (CcmB).

It localises to the cell inner membrane. The enzyme catalyses heme b(in) + ATP + H2O = heme b(out) + ADP + phosphate + H(+). In terms of biological role, part of the ABC transporter complex CcmAB involved in the biogenesis of c-type cytochromes; once thought to export heme, this seems not to be the case, but its exact role is uncertain. Responsible for energy coupling to the transport system. The sequence is that of Cytochrome c biogenesis ATP-binding export protein CcmA from Paraburkholderia xenovorans (strain LB400).